The following is a 448-amino-acid chain: tRNA modification GTPase MnmE (448 aa).

(6S)-5-formyl-5,6,7,8-tetrahydrofolate is bound by residues Arg-24, Glu-81, and Lys-120. A TrmE-type G domain is found at 216–373 (GLNVVLVGAP…LKRTLLREAG (158 aa)). Asn-226 contacts K(+). GTP is bound by residues 226-231 (NVGKSS), 245-251 (TDIAGTT), and 270-273 (DTAG). Ser-230 is a Mg(2+) binding site. Thr-245, Ile-247, and Thr-250 together coordinate K(+). A Mg(2+)-binding site is contributed by Thr-251. A (6S)-5-formyl-5,6,7,8-tetrahydrofolate-binding site is contributed by Lys-448.

The protein belongs to the TRAFAC class TrmE-Era-EngA-EngB-Septin-like GTPase superfamily. TrmE GTPase family. Homodimer. Heterotetramer of two MnmE and two MnmG subunits. K(+) serves as cofactor.

It localises to the cytoplasm. Its function is as follows. Exhibits a very high intrinsic GTPase hydrolysis rate. Involved in the addition of a carboxymethylaminomethyl (cmnm) group at the wobble position (U34) of certain tRNAs, forming tRNA-cmnm(5)s(2)U34. The chain is tRNA modification GTPase MnmE from Neisseria meningitidis serogroup B (strain ATCC BAA-335 / MC58).